Reading from the N-terminus, the 386-residue chain is MSYDDHAVLEAILRCAGGDERFLLNTVEEWGAAEITAALVDELLFRCEIPQVGGEAFIGLDVLHGADRISHVLQVTDGKPVTSAEPAGQELGGRTWSSRSATLLRELFGPPSGRTAGGFGVSFLPDLRGPRTMEGAALAARATNVVLHATTNETPPLDRLALRYESDKWGGVHWFTGHYDRHLRAVRDQAVRILEIGIGGYDDLLPSGASLKMWKRYFPRGLVFGVDIFDSRRATSRVSRRSAARQDDPEFMRRVAEEHGPFDVIIDDGSHINAHMRTSFSVMFPHLRNGGFYVIEDTFTSYWPGYGGPSGARCPSGTTALEMVKGLIDSVHYEERPDGAATADYIARNLVGLHAYQTTSSSSRRAINKEGGIPHTVPREPFWNDN.

S-adenosyl-L-methionine contacts are provided by residues Ser-166, 195-201, Ser-210, Asp-227, 245-246, and Asp-268; these read EIGIGGY and RQ. Asp-268 provides a ligand contact to Mg(2+). The active-site Proton acceptor is the His-271. Residues Glu-296 and Asp-297 each contribute to the Mg(2+) site. The tract at residues 364-386 is disordered; the sequence is RRAINKEGGIPHTVPREPFWNDN.

It belongs to the methyltransferase OleY/MycE family. In terms of assembly, homodimer. It depends on Mg(2+) as a cofactor.

The enzyme catalyses L-olivosyl-oleandolide + S-adenosyl-L-methionine = L-oleandrosyl-oleandolide + S-adenosyl-L-homocysteine + H(+). It participates in antibiotic biosynthesis. Functionally, 3-O-methyltransferase involved in the synthesis of L-oleandrose, a sugar attached to oleandomycin, a macrolide antibiotic. Acts on monoglycosylated macrolactones and mediates the conversion of L-olivosyl-erythronolide B into its 3-O-methylated derivative, L-oleandrosyl-erythronolide B. Also able to methylate other monoglycosylated derivatives, such as L-rhamnosyl- and L-mycarosyl-erythronolide B. The protein is L-olivosyl-oleandolide 3-O-methyltransferase (oleY) of Streptomyces antibioticus.